The following is a 198-amino-acid chain: GTP-binding protein Di-Ras1 (198 aa).

GTP contacts are provided by residues glycine 17 to serine 22, arginine 33 to threonine 39, aspartate 61 to serine 65, asparagine 121 to glutamate 125, alanine 151, and alanine 151 to lysine 152. Residues tyrosine 36 to tyrosine 44 carry the Effector region motif. Positions aspartate 178–lysine 192 are enriched in basic and acidic residues. The segment at aspartate 178–methionine 198 is disordered. Residue cysteine 195 is modified to Cysteine methyl ester. The S-geranylgeranyl cysteine moiety is linked to residue cysteine 195. Positions threonine 196–methionine 198 are cleaved as a propeptide — removed in mature form.

It belongs to the small GTPase superfamily. Di-Ras family. As to expression, highly expressed in heart and brain.

Its subcellular location is the cell membrane. Functionally, displays low GTPase activity and exists predominantly in the GTP-bound form. This Homo sapiens (Human) protein is GTP-binding protein Di-Ras1 (DIRAS1).